The primary structure comprises 305 residues: Glycine--tRNA ligase alpha subunit (305 aa).

Belongs to the class-II aminoacyl-tRNA synthetase family. As to quaternary structure, tetramer of two alpha and two beta subunits.

The protein localises to the cytoplasm. The enzyme catalyses tRNA(Gly) + glycine + ATP = glycyl-tRNA(Gly) + AMP + diphosphate. The protein is Glycine--tRNA ligase alpha subunit of Streptococcus pyogenes serotype M2 (strain MGAS10270).